The following is a 154-amino-acid chain: Transcriptional repressor NrdR (154 aa).

A zinc finger lies at 3–34 (CPFCRHPDSRVVDSRETDEGQAIRRRRSCPEC). The ATP-cone domain occupies 46–136 (LAVVKRSGVT…VYRSFSSAED (91 aa)).

This sequence belongs to the NrdR family. Zn(2+) serves as cofactor.

Its function is as follows. Negatively regulates transcription of bacterial ribonucleotide reductase nrd genes and operons by binding to NrdR-boxes. This chain is Transcriptional repressor NrdR, found in Mycolicibacterium vanbaalenii (strain DSM 7251 / JCM 13017 / BCRC 16820 / KCTC 9966 / NRRL B-24157 / PYR-1) (Mycobacterium vanbaalenii).